Reading from the N-terminus, the 294-residue chain is Proteasome subunit beta (294 aa).

The propeptide at 1-65 is removed in mature form; by autocatalysis; it reads MTADRPALRT…MESGDLAPHG (65 aa). Residue T66 is the Nucleophile of the active site.

Belongs to the peptidase T1B family. The 20S proteasome core is composed of 14 alpha and 14 beta subunits that assemble into four stacked heptameric rings, resulting in a barrel-shaped structure. The two inner rings, each composed of seven catalytic beta subunits, are sandwiched by two outer rings, each composed of seven alpha subunits. The catalytic chamber with the active sites is on the inside of the barrel. Has a gated structure, the ends of the cylinder being occluded by the N-termini of the alpha-subunits. Is capped by the proteasome-associated ATPase, ARC.

The protein localises to the cytoplasm. It catalyses the reaction Cleavage of peptide bonds with very broad specificity.. It participates in protein degradation; proteasomal Pup-dependent pathway. Its activity is regulated as follows. The formation of the proteasomal ATPase ARC-20S proteasome complex, likely via the docking of the C-termini of ARC into the intersubunit pockets in the alpha-rings, may trigger opening of the gate for substrate entry. Interconversion between the open-gate and close-gate conformations leads to a dynamic regulation of the 20S proteasome proteolysis activity. Its function is as follows. Component of the proteasome core, a large protease complex with broad specificity involved in protein degradation. The polypeptide is Proteasome subunit beta (Rhodococcus jostii (strain RHA1)).